We begin with the raw amino-acid sequence, 705 residues long: Elongation factor G (705 aa).

The tr-type G domain maps to 8-290; it reads ERYRNFGIMA…GVVHLLPSPA (283 aa). GTP is bound by residues 17–24, 88–92, and 142–145; these read AHIDAGKT, DTPGH, and NKMD. A disordered region spans residues 290 to 309; the sequence is ADRPPVQGIDEDEKEDTRAA.

It belongs to the TRAFAC class translation factor GTPase superfamily. Classic translation factor GTPase family. EF-G/EF-2 subfamily.

The protein localises to the cytoplasm. Its function is as follows. Catalyzes the GTP-dependent ribosomal translocation step during translation elongation. During this step, the ribosome changes from the pre-translocational (PRE) to the post-translocational (POST) state as the newly formed A-site-bound peptidyl-tRNA and P-site-bound deacylated tRNA move to the P and E sites, respectively. Catalyzes the coordinated movement of the two tRNA molecules, the mRNA and conformational changes in the ribosome. The sequence is that of Elongation factor G from Xanthomonas axonopodis pv. citri (strain 306).